The primary structure comprises 447 residues: N-succinylarginine dihydrolase (447 aa).

Residues 19–28 (AGLSFGNEAS), asparagine 110, and 137–138 (HR) each bind substrate. Glutamate 174 is a catalytic residue. Arginine 212 serves as a coordination point for substrate. Histidine 248 is an active-site residue. 2 residues coordinate substrate: aspartate 250 and asparagine 359. Cysteine 365 acts as the Nucleophile in catalysis.

This sequence belongs to the succinylarginine dihydrolase family. Homodimer.

It carries out the reaction N(2)-succinyl-L-arginine + 2 H2O + 2 H(+) = N(2)-succinyl-L-ornithine + 2 NH4(+) + CO2. The protein operates within amino-acid degradation; L-arginine degradation via AST pathway; L-glutamate and succinate from L-arginine: step 2/5. In terms of biological role, catalyzes the hydrolysis of N(2)-succinylarginine into N(2)-succinylornithine, ammonia and CO(2). The chain is N-succinylarginine dihydrolase from Escherichia coli (strain K12 / MC4100 / BW2952).